The sequence spans 450 residues: MRKTLTSIRFLSDGIRVKDKWNSLISDLVVEPTNSTGPLSGTTYIVKDNIATSHGYTTAASKILSNYESPFNATIIDLLSSNGSKLIGKSNLDEFGMGSANYNSYFNKVTNPYDNTKVPGGSSGGSAASVAGKMCSFSIGTDTGGSVRLPASYCNVFGFKPTYGRISRWGVIPYAQTLDTVGIIGENVNIIKRVYDVLNKYDDKDPTCLPEEVRQKIPTTKKETLTIGVPHEFVLKELSADVRESWEYALSKICKLGHLVKPISIKTIKKALPSYYTLATAEAASNLSRYDSIRYGYNTNESVNSPIELIATNRSDGFGSEVQRRILLGNYTLSSDSGDHYLRATQIREELCAEFSSIFNNSHVLLQDEQSSDKVDLIMAPTSTSTAPTWDEFVSANEKNFLNSYVNDVLTVPASLAGIPAISVPVNGIGIQLMGQFGDDDLVLQLADQI.

Catalysis depends on charge relay system residues K47 and S122. Catalysis depends on S146, which acts as the Acyl-ester intermediate.

It belongs to the amidase family. GatA subfamily. Subunit of the heterotrimeric GatFAB amidotransferase (AdT) complex, composed of A, B and F subunits.

It is found in the mitochondrion. It carries out the reaction L-glutamyl-tRNA(Gln) + L-glutamine + ATP + H2O = L-glutaminyl-tRNA(Gln) + L-glutamate + ADP + phosphate + H(+). In terms of biological role, allows the formation of correctly charged Gln-tRNA(Gln) through the transamidation of misacylated Glu-tRNA(Gln) in the mitochondria. The reaction takes place in the presence of glutamine and ATP through an activated gamma-phospho-Glu-tRNA(Gln). The chain is Glutamyl-tRNA(Gln) amidotransferase subunit A, mitochondrial from Candida albicans (strain WO-1) (Yeast).